Reading from the N-terminus, the 64-residue chain is Large ribosomal subunit protein bL33 (64 aa).

Over residues 16 to 25 the composition is skewed to basic and acidic residues; the sequence is EARTSSEPRR. Residues 16–41 are disordered; sequence EARTSSEPRRSNGVSRYTTEKNKRNT.

Belongs to the bacterial ribosomal protein bL33 family.

The sequence is that of Large ribosomal subunit protein bL33 from Prochlorococcus marinus subsp. pastoris (strain CCMP1986 / NIES-2087 / MED4).